We begin with the raw amino-acid sequence, 600 residues long: MAIRQLSETLINQIAAGEVIERPASAAKELIENALDAGATRIEIATSGGGKALLRVSDNGSGMDAADLELAVRRHCTSKISETLEDIRTLGFRGEALPSIGSVARLSIASRRRDSAGGHEIAVAGGKIAHLRPAAANPGTIVEVRDLFFATPARLKFLKTEKAEAGAITEIVKRMAIAFPAVRFVLSGSDRTTLEFPATGDDHLGRMAQVLGKEFRDNAIALDAVREEIALTGFAGVPTFNRGNSAHQYAFVNGRPVQDKLILSAIRGAYAETIPSGRYPVAVLSITLDPALVDVNVHPAKSDVRFRDPGLVRGLIVGAIREALARDGSRAATTGASDMLRSFRPGFPPNSQRPQTAWSAETSSSRPYQPATGFGERPQASFDGLSMPTARAEPQFSPQPAAAEPNARYPLGAARAQIHANYIVAQTEDGLVIVDQHAAHERLVFEAMRKALHSKRLASQVLLIPEIVDIPEEDCDRLMQHAAELSELGLAIERFGPGAIAVRETPAMLGEVDAHGLIRQLADEIAEWDTASGLSAKLEYVAATMACHGSVRSGRRLRPEEMNALLREMEVTPGSGQCNHGRPTYIELKLSDIERLFGRS.

Residues 327–405 (DGSRAATTGA…FSPQPAAAEP (79 aa)) form a disordered region. Residues 349-367 (PNSQRPQTAWSAETSSSRP) show a composition bias toward polar residues.

This sequence belongs to the DNA mismatch repair MutL/HexB family.

Its function is as follows. This protein is involved in the repair of mismatches in DNA. It is required for dam-dependent methyl-directed DNA mismatch repair. May act as a 'molecular matchmaker', a protein that promotes the formation of a stable complex between two or more DNA-binding proteins in an ATP-dependent manner without itself being part of a final effector complex. This Rhizobium johnstonii (strain DSM 114642 / LMG 32736 / 3841) (Rhizobium leguminosarum bv. viciae) protein is DNA mismatch repair protein MutL.